The chain runs to 162 residues: NADH-quinone oxidoreductase subunit I (162 aa).

4Fe-4S ferredoxin-type domains follow at residues 53 to 83 (LRRY…IDSE) and 93 to 122 (TRYD…ETRI). 8 residues coordinate [4Fe-4S] cluster: Cys-63, Cys-66, Cys-69, Cys-73, Cys-102, Cys-105, Cys-108, and Cys-112.

It belongs to the complex I 23 kDa subunit family. NDH-1 is composed of 14 different subunits. Subunits NuoA, H, J, K, L, M, N constitute the membrane sector of the complex. Requires [4Fe-4S] cluster as cofactor.

It localises to the cell inner membrane. The catalysed reaction is a quinone + NADH + 5 H(+)(in) = a quinol + NAD(+) + 4 H(+)(out). In terms of biological role, NDH-1 shuttles electrons from NADH, via FMN and iron-sulfur (Fe-S) centers, to quinones in the respiratory chain. The immediate electron acceptor for the enzyme in this species is believed to be ubiquinone. Couples the redox reaction to proton translocation (for every two electrons transferred, four hydrogen ions are translocated across the cytoplasmic membrane), and thus conserves the redox energy in a proton gradient. This is NADH-quinone oxidoreductase subunit I from Thiobacillus denitrificans (strain ATCC 25259 / T1).